A 313-amino-acid chain; its full sequence is 4-diphosphocytidyl-2-C-methyl-D-erythritol kinase (313 aa).

K10 is an active-site residue. 95–105 (PVTAGLGGGSS) is an ATP binding site. The active site involves D136. Residues 289–313 (HPRVSPWRSPRSASSRSTRRSSRPT) are disordered. Low complexity predominate over residues 292–304 (VSPWRSPRSASSR).

Belongs to the GHMP kinase family. IspE subfamily.

It carries out the reaction 4-CDP-2-C-methyl-D-erythritol + ATP = 4-CDP-2-C-methyl-D-erythritol 2-phosphate + ADP + H(+). It participates in isoprenoid biosynthesis; isopentenyl diphosphate biosynthesis via DXP pathway; isopentenyl diphosphate from 1-deoxy-D-xylulose 5-phosphate: step 3/6. In terms of biological role, catalyzes the phosphorylation of the position 2 hydroxy group of 4-diphosphocytidyl-2C-methyl-D-erythritol. This chain is 4-diphosphocytidyl-2-C-methyl-D-erythritol kinase, found in Anaeromyxobacter sp. (strain K).